The primary structure comprises 260 residues: MNKFLIIDGLNLVRRIYAAIPDENDMDSLTERVSVACTKLLRIHHPTHVTIVWDGDEMSWRKQLYPDYKKGRKPMPEPLAAGLPALQEHLKSVQIQSIYAAAEADDVIATLAMKTAKAQGEAVIVSTDKGFSQLNHPRISQWDHFNQQYLNITELEQKLGVDRSQFLDLLALAGDSGNKIPGIAGIGPKSAAELLRTFRTLAALFSSLPNLGAKQAKKLAEGRDMARLSYKLAQLQIDLPLNINLKDFRVNGPATTPQLD.

D105 serves as a coordination point for Mg(2+). Residues 164–254 (SQFLDLLALA…LKDFRVNGPA (91 aa)) enclose the 5'-3' exonuclease domain. L172, A173, P181, I183, and I186 together coordinate K(+). An interaction with DNA region spans residues 185-190 (GIGPKS).

It belongs to the Xni family. Mg(2+) serves as cofactor. It depends on K(+) as a cofactor.

Its function is as follows. Has flap endonuclease activity. During DNA replication, flap endonucleases cleave the 5'-overhanging flap structure that is generated by displacement synthesis when DNA polymerase encounters the 5'-end of a downstream Okazaki fragment. This Shewanella sp. (strain ANA-3) protein is Flap endonuclease Xni.